A 214-amino-acid polypeptide reads, in one-letter code: 7-cyano-7-deazaguanine synthase (214 aa).

10–20 is an ATP binding site; sequence FSGGQDSTTCL. Zn(2+)-binding residues include C184, C193, C196, and C199.

Belongs to the QueC family. In terms of assembly, homodimer. Requires Zn(2+) as cofactor.

It carries out the reaction 7-carboxy-7-deazaguanine + NH4(+) + ATP = 7-cyano-7-deazaguanine + ADP + phosphate + H2O + H(+). It functions in the pathway purine metabolism; 7-cyano-7-deazaguanine biosynthesis. Catalyzes the ATP-dependent conversion of 7-carboxy-7-deazaguanine (CDG) to 7-cyano-7-deazaguanine (preQ(0)). The sequence is that of 7-cyano-7-deazaguanine synthase from Exiguobacterium sp. (strain ATCC BAA-1283 / AT1b).